The primary structure comprises 92 residues: YcgL domain-containing protein SO_2575 (92 aa).

Residues 1–85 enclose the YcgL domain; the sequence is MLCAVYKSSR…PQVNLLAEHR (85 aa).

This is YcgL domain-containing protein SO_2575 from Shewanella oneidensis (strain ATCC 700550 / JCM 31522 / CIP 106686 / LMG 19005 / NCIMB 14063 / MR-1).